Here is a 343-residue protein sequence, read N- to C-terminus: L-threonine 3-dehydrogenase (343 aa).

C40 contacts Zn(2+). Catalysis depends on charge relay system residues T42 and H45. Residues H65, E66, C95, C98, C101, and C109 each coordinate Zn(2+). NAD(+)-binding positions include I177, D197, R202, 264–266 (LGI), and 288–289 (IY).

This sequence belongs to the zinc-containing alcohol dehydrogenase family. In terms of assembly, homotetramer. Zn(2+) is required as a cofactor.

It localises to the cytoplasm. The catalysed reaction is L-threonine + NAD(+) = (2S)-2-amino-3-oxobutanoate + NADH + H(+). Its pathway is amino-acid degradation; L-threonine degradation via oxydo-reductase pathway; glycine from L-threonine: step 1/2. Its function is as follows. Catalyzes the NAD(+)-dependent oxidation of L-threonine to 2-amino-3-ketobutyrate. This chain is L-threonine 3-dehydrogenase, found in Vibrio parahaemolyticus serotype O3:K6 (strain RIMD 2210633).